The following is an 856-amino-acid chain: Nuclear valosin-containing protein-like (856 aa).

Positions 1 to 220 (MKPRPAGFVD…SLLESDMKRK (220 aa)) are interaction with RPL5. The short motif at 49–52 (RRKR) is the Nucleolar localization signal element. Residue lysine 70 is modified to N6-acetyllysine. Residues 84-175 (AKRARQGEED…AKDSEGGWFI (92 aa)) are disordered. A Nuclear localization signal motif is present at residues 85 to 88 (KRAR). Acidic residues predominate over residues 92 to 111 (EDNEYTESYSDDDSSMEDYP). 2 stretches are compositionally biased toward polar residues: residues 114-124 (QSANHMNSSLL) and 133-158 (DSVS…SKTG). Serine 134 is subject to Phosphoserine. The residue at position 138 (threonine 138) is a Phosphothreonine. Lysine 156 bears the N6-acetyllysine mark. Serine 191 bears the Phosphoserine mark. Residues 197–236 (PKKPITEIQDSKDSSLLESDMKRKGKLKNKGSKRKKEDLQ) form a disordered region. The span at 205-218 (QDSKDSSLLESDMK) shows a compositional bias: basic and acidic residues. Lysine 208 participates in a covalent cross-link: Glycyl lysine isopeptide (Lys-Gly) (interchain with G-Cter in SUMO2). A phosphoserine mark is found at serine 211 and serine 215. The short motif at 218-232 (KRKGKLKNKGSKRKK) is the Nuclear localization signal element. The segment covering 219 to 230 (RKGKLKNKGSKR) has biased composition (basic residues). Residues 267–474 (VGGNDMTLKE…LTPGFVGADL (208 aa)) are interaction with WDR74. Residue 305 to 312 (GPPGCGKT) participates in ATP binding. The disordered stretch occupies residues 496–523 (QQKKNPEMEDLPSKGVQEERLGTEPTSE). An ATP-binding site is contributed by 622–629 (GPPGCGKT).

Belongs to the AAA ATPase family. Interacts with NCL/nucleolin. Isoform 1 and isoform 2 interact with TERT and isoform 1 exhibits a higher binding affinity for TERT compared to isoform 2. Isoform 1 interacts with MTREX in an ATP-dependent manner; the interaction is required to associate NVL with nuclear RNA exosome. Isoform 1 interacts with RPL5 in an ATP-dependent manner. Interacts with WDR74 (through WDR repeats); the interaction is independent of RNA or pre-60S ribosome particles. In terms of tissue distribution, widely expressed. Highest level of expression in heart, placenta, skeletal muscle, pancreas and retina.

Its subcellular location is the nucleus. The protein localises to the nucleoplasm. It is found in the nucleolus. In terms of biological role, participates in the assembly of the telomerase holoenzyme and effecting of telomerase activity via its interaction with TERT. Involved in both early and late stages of the pre-rRNA processing pathways. Spatiotemporally regulates 60S ribosomal subunit biogenesis in the nucleolus. Catalyzes the release of specific assembly factors, such as WDR74, from pre-60S ribosomal particles through the ATPase activity. This Homo sapiens (Human) protein is Nuclear valosin-containing protein-like.